Reading from the N-terminus, the 390-residue chain is Chorismate synthase 2 (390 aa).

2 residues coordinate NADP(+): R39 and R45. FMN contacts are provided by residues 132-134 (RSS), 253-254 (NA), G298, 313-317 (KPIPT), and R339.

Belongs to the chorismate synthase family. Homotetramer. FMNH2 is required as a cofactor.

It catalyses the reaction 5-O-(1-carboxyvinyl)-3-phosphoshikimate = chorismate + phosphate. It participates in metabolic intermediate biosynthesis; chorismate biosynthesis; chorismate from D-erythrose 4-phosphate and phosphoenolpyruvate: step 7/7. In terms of biological role, catalyzes the anti-1,4-elimination of the C-3 phosphate and the C-6 proR hydrogen from 5-enolpyruvylshikimate-3-phosphate (EPSP) to yield chorismate, which is the branch point compound that serves as the starting substrate for the three terminal pathways of aromatic amino acid biosynthesis. This reaction introduces a second double bond into the aromatic ring system. In Bacillus cereus (strain ATCC 14579 / DSM 31 / CCUG 7414 / JCM 2152 / NBRC 15305 / NCIMB 9373 / NCTC 2599 / NRRL B-3711), this protein is Chorismate synthase 2.